We begin with the raw amino-acid sequence, 361 residues long: Mannose-1-phosphate guanylyltransferase 1 (361 aa).

Residues Leu-6 and Val-7 each coordinate GDP-alpha-D-mannose. Diphosphate-binding residues include Gly-9, Gly-11, Thr-12, Arg-13, and Lys-23. Residues Gly-85, Asn-109, Asp-111, Gly-146, and Asn-173 each coordinate GDP-alpha-D-mannose.

The protein belongs to the transferase hexapeptide repeat family. Interacts in vitro with CSN5A and CSN5B, but in planta only with CSN5B, which targets CYT1 for degradation in the dark by the 26S proteasome. Forms homodimers in the unliganded structure. The product-bound structure is composed of six dimers that form a dodecameric assembly.

It is found in the cytoplasm. It localises to the nucleus. The catalysed reaction is alpha-D-mannose 1-phosphate + GTP + H(+) = GDP-alpha-D-mannose + diphosphate. It functions in the pathway nucleotide-sugar biosynthesis; GDP-alpha-D-mannose biosynthesis; GDP-alpha-D-mannose from alpha-D-mannose 1-phosphate (GTP route): step 1/1. In terms of biological role, essential protein during embryogenesis. Catalyzes a reaction of the Smirnoff-Wheeler pathway, the major route to ascorbate biosynthesis in plants. Plays an essential role in plant growth and development and cell-wall architecture. Provides GDP-mannose, used for cell wall carbohydrate biosynthesis, protein N-glycosylation, as well as for the biosynthesis of the antioxidant ascorbate. The polypeptide is Mannose-1-phosphate guanylyltransferase 1 (Arabidopsis thaliana (Mouse-ear cress)).